The chain runs to 245 residues: Biosynthetic peptidoglycan transglycosylase (245 aa).

A helical membrane pass occupies residues 19–41 (CLRWVLAAPLLFAAASVLQVLFL).

Belongs to the glycosyltransferase 51 family.

Its subcellular location is the cell inner membrane. The enzyme catalyses [GlcNAc-(1-&gt;4)-Mur2Ac(oyl-L-Ala-gamma-D-Glu-L-Lys-D-Ala-D-Ala)](n)-di-trans,octa-cis-undecaprenyl diphosphate + beta-D-GlcNAc-(1-&gt;4)-Mur2Ac(oyl-L-Ala-gamma-D-Glu-L-Lys-D-Ala-D-Ala)-di-trans,octa-cis-undecaprenyl diphosphate = [GlcNAc-(1-&gt;4)-Mur2Ac(oyl-L-Ala-gamma-D-Glu-L-Lys-D-Ala-D-Ala)](n+1)-di-trans,octa-cis-undecaprenyl diphosphate + di-trans,octa-cis-undecaprenyl diphosphate + H(+). Its pathway is cell wall biogenesis; peptidoglycan biosynthesis. In terms of biological role, peptidoglycan polymerase that catalyzes glycan chain elongation from lipid-linked precursors. The protein is Biosynthetic peptidoglycan transglycosylase of Xanthomonas oryzae pv. oryzae (strain KACC10331 / KXO85).